Reading from the N-terminus, the 397-residue chain is Purine ribonucleoside efflux pump NepI (397 aa).

Residues 1–21 are Cytoplasmic-facing; sequence MNENIAEKFRADGVARPNWSA. Residues 22 to 42 form a helical membrane-spanning segment; it reads VFAVAFCVACLITVEFLPVSL. Topologically, residues 43–54 are periplasmic; that stretch reads LTPMAQDLGISE. Residues 55-75 form a helical membrane-spanning segment; that stretch reads GVAGQSVTVTAFVAMFSSLFI. Residues 76 to 85 are Cytoplasmic-facing; that stretch reads TQIIQATDRR. The helical transmembrane segment at 86 to 106 threads the bilayer; sequence YIVILFAVLLTASCLMVSFAN. Residue Ser107 is a topological domain, periplasmic. Residues 108–128 form a helical membrane-spanning segment; sequence FTLLLLGRACLGLALGGFWAM. Topologically, residues 129–147 are cytoplasmic; that stretch reads SASLTMRLVPARTVPKALS. A helical membrane pass occupies residues 148 to 168; that stretch reads VIFGAVSIALVIAAPLGSFLG. At 169-175 the chain is on the periplasmic side; that stretch reads GIIGWRN. The chain crosses the membrane as a helical span at residues 176–196; that stretch reads VFNAAAVMGVLCVIWVVKSLP. Residues 197-215 are Cytoplasmic-facing; it reads SLPGEPSHQKQNMFSLLQR. The helical transmembrane segment at 216-236 threads the bilayer; sequence PGVMAGMIAIFMSFAGQFAFF. Topologically, residues 237 to 255 are periplasmic; sequence TYIRPVYMNLAGFDVDGLT. A helical transmembrane segment spans residues 256–276; that stretch reads LVLLSFGIASFVGTSFSSYVL. Residues 277–281 lie on the Cytoplasmic side of the membrane; it reads KRSVK. The chain crosses the membrane as a helical span at residues 282 to 302; that stretch reads LALAGAPLLLALSALTLIVWG. The Periplasmic portion of the chain corresponds to 303–305; sequence SDK. Residues 306 to 326 traverse the membrane as a helical segment; sequence TVAAVIAIIWGLAFALVPVGW. Topologically, residues 327–343 are cytoplasmic; the sequence is STWITRSLADQAEKAGS. The helical transmembrane segment at 344–364 threads the bilayer; the sequence is IQVAVIQLANTCGAAVGGYAL. Residues 365-366 lie on the Periplasmic side of the membrane; the sequence is DN. Residues 367–387 form a helical membrane-spanning segment; that stretch reads FGLLSPLALSGGLMLLTALVV. Residues 388–397 lie on the Cytoplasmic side of the membrane; that stretch reads AAKVRITPMS.

This sequence belongs to the major facilitator superfamily. DHA1 family. NepI (TC 2.A.1.2.26) subfamily.

It localises to the cell inner membrane. The catalysed reaction is inosine(in) + H(+)(out) = inosine(out) + H(+)(in). The enzyme catalyses guanosine(in) + H(+)(out) = guanosine(out) + H(+)(in). Functionally, involved in the efflux of purine ribonucleosides, such as inosine and guanosine. In Salmonella paratyphi B (strain ATCC BAA-1250 / SPB7), this protein is Purine ribonucleoside efflux pump NepI.